A 1416-amino-acid polypeptide reads, in one-letter code: DNA-directed RNA polymerase subunit beta' (1416 aa).

Zn(2+) contacts are provided by Cys71, Cys73, Cys86, and Cys89. 3 residues coordinate Mg(2+): Asp461, Asp463, and Asp465. Zn(2+)-binding residues include Cys815, Cys889, Cys896, and Cys899.

Belongs to the RNA polymerase beta' chain family. The RNAP catalytic core consists of 2 alpha, 1 beta, 1 beta' and 1 omega subunit. When a sigma factor is associated with the core the holoenzyme is formed, which can initiate transcription. Requires Mg(2+) as cofactor. Zn(2+) is required as a cofactor.

The enzyme catalyses RNA(n) + a ribonucleoside 5'-triphosphate = RNA(n+1) + diphosphate. In terms of biological role, DNA-dependent RNA polymerase catalyzes the transcription of DNA into RNA using the four ribonucleoside triphosphates as substrates. This chain is DNA-directed RNA polymerase subunit beta', found in Haemophilus influenzae (strain PittGG).